A 35-amino-acid chain; its full sequence is 3-hydroxyisobutyrate dehydrogenase (35 aa).

4–33 (TPVGFIGLGNMGNPMAKNLMKHGYPLIIYD) contacts NAD(+). The residue at position 24 (Lys-24) is an N6-acetyllysine; alternate. At Lys-24 the chain carries N6-succinyllysine; alternate.

The protein belongs to the HIBADH-related family. 3-hydroxyisobutyrate dehydrogenase subfamily. Homodimer.

It is found in the mitochondrion. It catalyses the reaction 3-hydroxy-2-methylpropanoate + NAD(+) = 2-methyl-3-oxopropanoate + NADH + H(+). It functions in the pathway amino-acid degradation; L-valine degradation. The chain is 3-hydroxyisobutyrate dehydrogenase (HIBADH) from Oryctolagus cuniculus (Rabbit).